A 478-amino-acid polypeptide reads, in one-letter code: MSKRKQVTIPIEKIQEQDKYIEQIHRQNEEYFNRTGKRKLVFTQTFGCQMNEHDSEKLCSMLEEMGYQMSMMVEESDLIIYNTCAVRENAELKVYGNLGQLKHLKGKNPDMKIAVCGCMMQQPHVVEELRKKYKHVDLIFGTHNLYKFPQLLTESINSDKMLVDVWDVDGEVIEGLRSNRKFELKAFVNIMYGCNNFCTYCIVPYTRGRERSRTPEDIINEIKELVANGTKEITLLGQNVDSYGKTLENPVSFSELLRKVNDIEGIERVRFMTSHPKDISDEVIYAIRDCDKVCEFLHLPIQCGSSSLLKKMNRHYTKEYYLEIIEKAKKEVPGIAFSTDLMIGFPGETEEDLLDTLDVVEKVRYDSAFTFIYSKRQGTPAAKMENQIPEDIKHDRFNRVLEAVNRISAEINDGYKDRIVEVLVEGRSKNNENKFAGRTRQNKLVNFEGGNDDLIGKLVMVKITEPRTFSLNGILVNN.

Residues 39 to 157 form the MTTase N-terminal domain; sequence KLVFTQTFGC…FPQLLTESIN (119 aa). 6 residues coordinate [4Fe-4S] cluster: Cys48, Cys84, Cys118, Cys194, Cys198, and Cys201. A Radical SAM core domain is found at 180 to 410; it reads RKFELKAFVN…LEAVNRISAE (231 aa). The TRAM domain maps to 410–477; that stretch reads EINDGYKDRI…TFSLNGILVN (68 aa).

Belongs to the methylthiotransferase family. MiaB subfamily. In terms of assembly, monomer. [4Fe-4S] cluster serves as cofactor.

It is found in the cytoplasm. It carries out the reaction N(6)-dimethylallyladenosine(37) in tRNA + (sulfur carrier)-SH + AH2 + 2 S-adenosyl-L-methionine = 2-methylsulfanyl-N(6)-dimethylallyladenosine(37) in tRNA + (sulfur carrier)-H + 5'-deoxyadenosine + L-methionine + A + S-adenosyl-L-homocysteine + 2 H(+). Its function is as follows. Catalyzes the methylthiolation of N6-(dimethylallyl)adenosine (i(6)A), leading to the formation of 2-methylthio-N6-(dimethylallyl)adenosine (ms(2)i(6)A) at position 37 in tRNAs that read codons beginning with uridine. The protein is tRNA-2-methylthio-N(6)-dimethylallyladenosine synthase of Clostridioides difficile (strain 630) (Peptoclostridium difficile).